The chain runs to 321 residues: XylDLEGF operon transcriptional activator 1 (321 aa).

The HTH araC/xylS-type domain occupies 214–315 (ERVVQFIEEN…GELPSDTLRQ (102 aa)). 2 consecutive DNA-binding regions (H-T-H motif) follow at residues 231–252 (ERLA…EKHA) and 282–305 (ITEI…RSAF).

Its subcellular location is the cytoplasm. Its function is as follows. Regulatory protein of the TOL plasmid xyl operons. XylS activates the xylXYZLTEGFJQKIH operon required for the degradation of toluene, m-xylene and p-xylene. The protein is XylDLEGF operon transcriptional activator 1 (xylS1) of Pseudomonas putida (Arthrobacter siderocapsulatus).